A 215-amino-acid polypeptide reads, in one-letter code: UPF0502 protein YceH (215 aa).

Lys-80 is subject to N6-acetyllysine.

It belongs to the UPF0502 family.

The protein is UPF0502 protein YceH of Shigella boydii serotype 18 (strain CDC 3083-94 / BS512).